A 477-amino-acid chain; its full sequence is MVTATATATNVGYITQVIGPVIDAEFPSGKLPEIYNALKVEATTESGLKVKVTFEVQQLLGDNRVRAVAMSSTDGLVRGMPVVDTGAPITVPVGEATLGRIFNVLGEPVDQGEPVQAKEFAPIHRSAPPFVELTVKPEPFETGIKVIDLLAPFKRGGKVGLFGGAGVGKTVLIQELIHNIAEEHSGLSVFAGVGERTREGNDLYNEMKESGVLDKVALVYGQMNEPPGARMRVGLTALTMAEYFRDVNKQDVLLFIDNIFRFVQAGSEVSALLGRMPSAVGYQPTLATEMGNLQERITSTKQGSITSVQAVYVPADDLTDPAPATTFAHLDSTVVLSRSLAAKGIYPAVDPLDSSSTILQADIVGEEHYNTAQAVKQTLQRYKELQDIIAILGLDELSEEDKLVVARARRIERFLSQPFFVAEVFTGSPGKYVKLEDTIKGFQRILSGELDHLPEQAFYLVGTIEEAIEKAEKLKSK.

Residue 163-170 (GGAGVGKT) coordinates ATP.

It belongs to the ATPase alpha/beta chains family. In terms of assembly, F-type ATPases have 2 components, CF(1) - the catalytic core - and CF(0) - the membrane proton channel. CF(1) has five subunits: alpha(3), beta(3), gamma(1), delta(1), epsilon(1). CF(0) has four main subunits: a(1), b(1), b'(1) and c(9-12).

It localises to the cellular thylakoid membrane. The enzyme catalyses ATP + H2O + 4 H(+)(in) = ADP + phosphate + 5 H(+)(out). In terms of biological role, produces ATP from ADP in the presence of a proton gradient across the membrane. The catalytic sites are hosted primarily by the beta subunits. The sequence is that of ATP synthase subunit beta from Synechococcus sp. (strain JA-3-3Ab) (Cyanobacteria bacterium Yellowstone A-Prime).